The primary structure comprises 439 residues: Probable E3 ubiquitin-protein ligase makorin-1 (439 aa).

3 consecutive C3H1-type zinc fingers follow at residues 18–45 (WTKH…HDLS), 48–74 (KQTM…HTKP), and 163–190 (EMKK…HGDV). The disordered stretch occupies residues 73 to 118 (KPSKQDEVPSSKPSMPLTAAPLAGTPEPVSDGPGGTTGAQEKPQGS). The interval 191–218 (CDMCGLQVLHPSDTSQRSQHIRACIEAH) is makorin-type Cys-His. An RING-type zinc finger spans residues 236–290 (CGVCMEVVFEKTNPSERRFGILSNCCHCYCLKCIRKWRSAKQFESKIIKSCPECR). The C3H1-type 4 zinc-finger motif lies at 319 to 348 (GMGTKPCRYFDEGRGTCPFGANCFYKHAFP). Residues 352-371 (LEEPQPQRRQNGSNGRNRNT) form a disordered region. Residues 358-368 (QRRQNGSNGRN) are compositionally biased toward low complexity.

It carries out the reaction S-ubiquitinyl-[E2 ubiquitin-conjugating enzyme]-L-cysteine + [acceptor protein]-L-lysine = [E2 ubiquitin-conjugating enzyme]-L-cysteine + N(6)-ubiquitinyl-[acceptor protein]-L-lysine.. The protein operates within protein modification; protein ubiquitination. Functionally, E3 ubiquitin ligase catalyzing the covalent attachment of ubiquitin moieties onto substrate proteins. This Danio rerio (Zebrafish) protein is Probable E3 ubiquitin-protein ligase makorin-1.